The following is a 108-amino-acid chain: Large ribosomal subunit protein uL24 (108 aa).

This sequence belongs to the universal ribosomal protein uL24 family. In terms of assembly, part of the 50S ribosomal subunit.

Its function is as follows. One of two assembly initiator proteins, it binds directly to the 5'-end of the 23S rRNA, where it nucleates assembly of the 50S subunit. Functionally, one of the proteins that surrounds the polypeptide exit tunnel on the outside of the subunit. The sequence is that of Large ribosomal subunit protein uL24 from Citrifermentans bemidjiense (strain ATCC BAA-1014 / DSM 16622 / JCM 12645 / Bem) (Geobacter bemidjiensis).